A 212-amino-acid chain; its full sequence is Methylthioribulose-1-phosphate dehydratase (212 aa).

2 residues coordinate Zn(2+): histidine 97 and histidine 99.

It belongs to the aldolase class II family. MtnB subfamily. Homotetramer. Zn(2+) serves as cofactor.

It carries out the reaction 5-(methylsulfanyl)-D-ribulose 1-phosphate = 5-methylsulfanyl-2,3-dioxopentyl phosphate + H2O. The protein operates within amino-acid biosynthesis; L-methionine biosynthesis via salvage pathway; L-methionine from S-methyl-5-thio-alpha-D-ribose 1-phosphate: step 2/6. Its function is as follows. Catalyzes the dehydration of methylthioribulose-1-phosphate (MTRu-1-P) into 2,3-diketo-5-methylthiopentyl-1-phosphate (DK-MTP-1-P). This Bacillus cereus (strain AH187) protein is Methylthioribulose-1-phosphate dehydratase.